Here is a 513-residue protein sequence, read N- to C-terminus: Interferon-induced, double-stranded RNA-activated protein kinase (513 aa).

At Ala2 the chain carries N-acetylalanine. Residues Phe8 to Asn76 enclose the DRBM 1 domain. A Glycyl lysine isopeptide (Lys-Gly) (interchain with G-Cter in ISG15) cross-link involves residue Lys68. A Phosphoserine modification is found at Ser82. At Thr84 the chain carries Phosphothreonine. A DRBM 2 domain is found at Asn95–Glu162. Tyr96 is modified (phosphotyrosine; by autocatalysis). Residue Lys154 forms a Glycyl lysine isopeptide (Lys-Gly) (interchain with G-Cter in ISG15) linkage. At Tyr157 the chain carries Phosphotyrosine; by autocatalysis. Phosphothreonine is present on Thr227. The interaction with TRAF5 stretch occupies residues Asp235–Cys513. The region spanning Phe236–Lys502 is the Protein kinase domain. Residue Ile242–Val250 coordinates ATP. Tyr262 bears the Phosphotyrosine; by autocatalysis mark. Residue Lys265 participates in ATP binding. The active-site Proton acceptor is Asp373. Thr406 and Thr411 each carry phosphothreonine; by autocatalysis. Phosphoserine is present on Ser416.

It belongs to the protein kinase superfamily. Ser/Thr protein kinase family. GCN2 subfamily. Homodimer. Interacts with DNAJC3. Interacts with STRBP. Forms a complex with FANCA, FANCC, FANCG and HSP70. Interacts with ADAR/ADAR1. The inactive form interacts with NCK1 and GSN. Interacts (via the kinase catalytic domain) with STAT3 (via SH2 domain), TRAF2 (C-terminus), TRAF5 (C-terminus) and TRAF6 (C-terminus). Interacts with MAP2K6, IKBKB/IKKB, IRS1, NPM1, TARBP2, NLRP1, NLRP3, NLRC4 and AIM2. Interacts (via DRBM 1 domain) with DUS2L (via DRBM domain). Interacts with DHX9 (via N-terminus) and this interaction is dependent upon activation of the kinase. Autophosphorylated on several Ser, Thr and Tyr residues. Autophosphorylation of Thr-411 is dependent on Thr-406 and is stimulated by dsRNA binding and dimerization. Autophosphorylation apparently leads to the activation of the kinase. Tyrosine autophosphorylation is essential for efficient dsRNA-binding, dimerization, and kinase activation.

It localises to the cytoplasm. Its subcellular location is the nucleus. The protein resides in the perinuclear region. The enzyme catalyses L-seryl-[protein] + ATP = O-phospho-L-seryl-[protein] + ADP + H(+). It carries out the reaction L-threonyl-[protein] + ATP = O-phospho-L-threonyl-[protein] + ADP + H(+). It catalyses the reaction L-tyrosyl-[protein] + ATP = O-phospho-L-tyrosyl-[protein] + ADP + H(+). Its activity is regulated as follows. Initially produced in an inactive form and is activated by binding to viral dsRNA, which causes dimerization and autophosphorylation in the activation loop and stimulation of function. ISGylation can activate it in the absence of viral infection. Can also be activated by heparin, pro-inflammatory stimuli, growth factors, cytokines, oxidative stress and the cellular protein PRKRA. Activity is markedly stimulated by manganese ions. Activation is blocked by the cellular proteins TARBP2, DUS2L, NPM1, NCK1 and ADAR. Functionally, IFN-induced dsRNA-dependent serine/threonine-protein kinase that phosphorylates the alpha subunit of eukaryotic translation initiation factor 2 (EIF2S1/eIF-2-alpha) and plays a key role in the innate immune response to viral infection. Inhibits viral replication via the integrated stress response (ISR): EIF2S1/eIF-2-alpha phosphorylation in response to viral infection converts EIF2S1/eIF-2-alpha in a global protein synthesis inhibitor, resulting to a shutdown of cellular and viral protein synthesis, while concomitantly initiating the preferential translation of ISR-specific mRNAs, such as the transcriptional activator ATF4. Exerts its antiviral activity on a wide range of DNA and RNA viruses. Also involved in the regulation of signal transduction, apoptosis, cell proliferation and differentiation: phosphorylates other substrates including p53/TP53, PPP2R5A, DHX9, ILF3 and IRS1. In addition to serine/threonine-protein kinase activity, also has tyrosine-protein kinase activity and phosphorylates CDK1 at 'Tyr-4' upon DNA damage, facilitating its ubiquitination and proteasomal degradation. Either as an adapter protein and/or via its kinase activity, can regulate various signaling pathways (p38 MAP kinase, NF-kappa-B and insulin signaling pathways) and transcription factors (JUN, STAT1, STAT3, IRF1, ATF3) involved in the expression of genes encoding pro-inflammatory cytokines and IFNs. Activates the NF-kappa-B pathway via interaction with IKBKB and TRAF family of proteins and activates the p38 MAP kinase pathway via interaction with MAP2K6. Can act as both a positive and negative regulator of the insulin signaling pathway (ISP). Negatively regulates ISP by inducing the inhibitory phosphorylation of insulin receptor substrate 1 (IRS1) at 'Ser-312' and positively regulates ISP via phosphorylation of PPP2R5A which activates FOXO1, which in turn up-regulates the expression of insulin receptor substrate 2 (IRS2). Can regulate NLRP3 inflammasome assembly and the activation of NLRP3, NLRP1, AIM2 and NLRC4 inflammasomes. Plays a role in the regulation of the cytoskeleton by binding to gelsolin (GSN), sequestering the protein in an inactive conformation away from actin. In Rattus norvegicus (Rat), this protein is Interferon-induced, double-stranded RNA-activated protein kinase (Eif2ak2).